Reading from the N-terminus, the 1820-residue chain is uncharacterized protein (1820 aa).

Disordered stretches follow at residues 1 to 73 (MQWT…TLSG), 86 to 158 (TTTT…VRSA), 226 to 260 (GSSGPSSLVNSPALGRRKRYTSNSSNCSSQFNNNY), 286 to 366 (EERA…QETE), 453 to 497 (DVQD…RNLS), 519 to 548 (LSSISNKAPGGVPTESGVVTRPDSSDTDTA), 577 to 597 (GNSSTTTTTTSELGVPRPPTP), 619 to 689 (GAGT…TASG), and 735 to 830 (HSHN…TPSS). A compositionally biased stretch (polar residues) spans 20 to 31 (NRNSIEQRTPAN). Residues 86 to 128 (TTTTTIIESSSSTNTTLEKNSPSPAGGSCSSGSGSLSPAYLQH) show a composition bias toward low complexity. A compositionally biased stretch (basic residues) spans 129–146 (HLQHHGSPLHHLQVHHHT). Residues 247–259 (SNSSNCSSQFNNN) are compositionally biased toward low complexity. Positions 265–308 (VDSLDDMLRKLTELEQRVIEAEERAEEAEDKVRAMEQRLSEWPK) form a coiled coil. Residues 294–305 (DKVRAMEQRLSE) are compositionally biased toward basic and acidic residues. Over residues 346-358 (ASGGATAGAAGSG) the composition is skewed to low complexity. The stretch at 362-438 (TQETEKTITS…LKNHIANQSQ (77 aa)) forms a coiled coil. The segment covering 453-463 (DVQDFTGSGSN) has biased composition (polar residues). Ser542 and Ser543 each carry phosphoserine. Over residues 623 to 632 (GTSTAESTAS) the composition is skewed to low complexity. A compositionally biased stretch (gly residues) spans 655–669 (HGSGTGIGTGDGHGT). Residues 738 to 769 (NSSSTDNTETSTSGSASSPSKSLKTSSSLSPA) show a composition bias toward low complexity. Polar residues predominate over residues 787 to 818 (QSRTSTTPSSRINQHLQPSQHQHHTLSNQNHG). PH domains are found at residues 909 to 1003 (SLEK…NVQR) and 1017 to 1124 (KPTV…VVSG). Phosphoserine is present on residues Ser1073, Ser1075, and Ser1077. In terms of domain architecture, MyTH4 spans 1159-1378 (HTKDTITAPL…PSRMEVLSIL (220 aa)). The FERM domain maps to 1389-1712 (HAIPVHMMNS…DYMNALGHTV (324 aa)). Disordered stretches follow at residues 1713 to 1748 (PGTPQMNSLTRNGSHRSLRTSQRPNLGGGSAVATGF) and 1764 to 1820 (ATHT…QRIK). The segment covering 1714-1724 (GTPQMNSLTRN) has biased composition (polar residues). Residues 1764–1781 (ATHTLNSNHSHTLSSSHH) show a composition bias toward low complexity. A compositionally biased stretch (basic and acidic residues) spans 1805–1820 (HQPDILKSTPDHQRIK).

This is an uncharacterized protein from Drosophila melanogaster (Fruit fly).